The primary structure comprises 257 residues: Major prion protein (257 aa).

The N-terminal stretch at 1–24 (MVKSHIGSWLLVLFVATWSDIGFC) is a signal peptide. Positions 25–41 (KKRPKPGGGWNTGGSRY) are interaction with ADGRG6. Positions 25–234 (KKRPKPGGGW…ESEAYYQRGA (210 aa)) are interaction with GRB2, ERI3 and SYN1. The interval 27-114 (RPKPGGGWNT…KPSKPKTNMK (88 aa)) is disordered. 5 tandem repeats follow at residues 54–62 (PQGGGGWGQ), 63–70 (PHGGGWGQ), 71–78 (PHGGGWGQ), 79–86 (PHGGGWGQ), and 87–95 (PHGGGGWGQ). The 5 X 8 AA tandem repeats of P-H-G-G-G-W-G-Q stretch occupies residues 54–95 (PQGGGGWGQPHGGGWGQPHGGGWGQPHGGGWGQPHGGGGWGQ). Residues 55–101 (QGGGGWGQPHGGGWGQPHGGGWGQPHGGGWGQPHGGGGWGQGGGSHG) are compositionally biased toward gly residues. Cu(2+) is bound by residues H64, G65, G66, H72, G73, G74, H80, G81, G82, H88, G90, and G91. C183 and C218 are oxidised to a cystine. N185 and N201 each carry an N-linked (GlcNAc...) asparagine glycan. A234 carries the GPI-anchor amidated alanine lipid modification. The propeptide at 235 to 257 (SAILFSPPPVILLISLLILLIVG) is removed in mature form.

It belongs to the prion family. In terms of assembly, monomer and homodimer. Has a tendency to aggregate into amyloid fibrils containing a cross-beta spine, formed by a steric zipper of superposed beta-strands. Soluble oligomers may represent an intermediate stage on the path to fibril formation. Copper binding may promote oligomerization. Interacts with GRB2, APP, ERI3/PRNPIP and SYN1. Mislocalized cytosolically exposed PrP interacts with MGRN1; this interaction alters MGRN1 subcellular location and causes lysosomal enlargement. Interacts with APP. Interacts with KIAA1191. Interacts with ADGRG6.

The protein localises to the cell membrane. It localises to the golgi apparatus. Its function is as follows. Its primary physiological function is unclear. May play a role in neuronal development and synaptic plasticity. May be required for neuronal myelin sheath maintenance. May promote myelin homeostasis through acting as an agonist for ADGRG6 receptor. May play a role in iron uptake and iron homeostasis. Soluble oligomers are toxic to cultured neuroblastoma cells and induce apoptosis (in vitro). Association with GPC1 (via its heparan sulfate chains) targets PRNP to lipid rafts. Also provides Cu(2+) or Zn(2+) for the ascorbate-mediated GPC1 deaminase degradation of its heparan sulfate side chains. The protein is Major prion protein (PRNP) of Neovison vison (American mink).